Reading from the N-terminus, the 196-residue chain is Small ribosomal subunit protein uS4c (196 aa).

The tract at residues 17-36 (ALPGLTRKTPKSGSNLKKKF) is disordered. One can recognise an S4 RNA-binding domain in the interval 89 to 150 (MRLDNIVFRL…NQRSKRLVQN (62 aa)).

This sequence belongs to the universal ribosomal protein uS4 family. Part of the 30S ribosomal subunit. Contacts protein S5. The interaction surface between S4 and S5 is involved in control of translational fidelity.

It is found in the plastid. Its subcellular location is the chloroplast. Its function is as follows. One of the primary rRNA binding proteins, it binds directly to 16S rRNA where it nucleates assembly of the body of the 30S subunit. In terms of biological role, with S5 and S12 plays an important role in translational accuracy. This is Small ribosomal subunit protein uS4c (rps4) from Tragus racemosus (Carrot grass).